The following is a 482-amino-acid chain: tRNA sulfurtransferase (482 aa).

One can recognise a THUMP domain in the interval 61-165 (LAIRDALTRI…DDRLLLIKGR (105 aa)). Residues 183 to 184 (LI), Lys265, Gly287, and Gln296 contribute to the ATP site. A disulfide bridge links Cys344 with Cys456. Residues 404–482 (FGPNDVILDI…GFNNVKVYRP (79 aa)) enclose the Rhodanese domain. Cys456 serves as the catalytic Cysteine persulfide intermediate.

Belongs to the ThiI family.

Its subcellular location is the cytoplasm. It carries out the reaction [ThiI sulfur-carrier protein]-S-sulfanyl-L-cysteine + a uridine in tRNA + 2 reduced [2Fe-2S]-[ferredoxin] + ATP + H(+) = [ThiI sulfur-carrier protein]-L-cysteine + a 4-thiouridine in tRNA + 2 oxidized [2Fe-2S]-[ferredoxin] + AMP + diphosphate. It catalyses the reaction [ThiS sulfur-carrier protein]-C-terminal Gly-Gly-AMP + S-sulfanyl-L-cysteinyl-[cysteine desulfurase] + AH2 = [ThiS sulfur-carrier protein]-C-terminal-Gly-aminoethanethioate + L-cysteinyl-[cysteine desulfurase] + A + AMP + 2 H(+). It participates in cofactor biosynthesis; thiamine diphosphate biosynthesis. In terms of biological role, catalyzes the ATP-dependent transfer of a sulfur to tRNA to produce 4-thiouridine in position 8 of tRNAs, which functions as a near-UV photosensor. Also catalyzes the transfer of sulfur to the sulfur carrier protein ThiS, forming ThiS-thiocarboxylate. This is a step in the synthesis of thiazole, in the thiamine biosynthesis pathway. The sulfur is donated as persulfide by IscS. The protein is tRNA sulfurtransferase of Escherichia fergusonii (strain ATCC 35469 / DSM 13698 / CCUG 18766 / IAM 14443 / JCM 21226 / LMG 7866 / NBRC 102419 / NCTC 12128 / CDC 0568-73).